The primary structure comprises 1401 residues: DNA-directed RNA polymerase subunit beta (1401 aa).

The protein belongs to the RNA polymerase beta chain family. As to quaternary structure, the RNAP catalytic core consists of 2 alpha, 1 beta, 1 beta' and 1 omega subunit. When a sigma factor is associated with the core the holoenzyme is formed, which can initiate transcription.

The enzyme catalyses RNA(n) + a ribonucleoside 5'-triphosphate = RNA(n+1) + diphosphate. Its function is as follows. DNA-dependent RNA polymerase catalyzes the transcription of DNA into RNA using the four ribonucleoside triphosphates as substrates. In Zymomonas mobilis subsp. mobilis (strain ATCC 31821 / ZM4 / CP4), this protein is DNA-directed RNA polymerase subunit beta.